A 206-amino-acid polypeptide reads, in one-letter code: MAAAGASASGLILSRPVTFVTGNAKKLEEVRYILGQSIPFNSLKLDLPELQGEPEDISKEKARLAAIQVNGPVLVEDTCLCFNALKGLPGPYIKWFLQKIGHEGLNNLLMAYEDKSAYALCAFSFALGPDAEPVTFLGKTPGKIVPPRGPNDFGWDPIFQPDGYEQTYAEMPKEEKNKISHRYKALALVKSHFAKAGYVFQTDSPI.

21 to 26 (TGNAKK) contributes to the ITP binding site. Glu-49 is a Mg(2+) binding site. Residues Lys-61, 77–78 (DT), Lys-94, 153–156 (FGWD), Lys-176, and 181–182 (HR) contribute to the ITP site.

The protein belongs to the HAM1 NTPase family. As to quaternary structure, homodimer. Requires Mg(2+) as cofactor. It depends on Mn(2+) as a cofactor.

The protein localises to the cytoplasm. It catalyses the reaction ITP + H2O = IMP + diphosphate + H(+). It carries out the reaction dITP + H2O = dIMP + diphosphate + H(+). The enzyme catalyses XTP + H2O = XMP + diphosphate + H(+). Functionally, pyrophosphatase that hydrolyzes non-canonical purine nucleotides such as inosine triphosphate (ITP), deoxyinosine triphosphate (dITP) or xanthosine 5'-triphosphate (XTP) to their respective monophosphate derivatives. The enzyme does not distinguish between the deoxy- and ribose forms. Probably excludes non-canonical purines from RNA and DNA precursor pools, thus preventing their incorporation into RNA and DNA and avoiding chromosomal lesions. This chain is Inosine triphosphate pyrophosphatase, found in Vitis vinifera (Grape).